The sequence spans 494 residues: Anthranilate synthase component 1 (494 aa).

L-tryptophan contacts are provided by residues serine 50 and 276 to 278 (PYM). Chorismate is bound at residue 311 to 312 (GT). Residue glutamate 338 participates in Mg(2+) binding. Residues tyrosine 426, arginine 446, 460–462 (GAG), and glycine 462 contribute to the chorismate site. Residue glutamate 475 participates in Mg(2+) binding.

The protein belongs to the anthranilate synthase component I family. In terms of assembly, heterotetramer consisting of two non-identical subunits: a beta subunit (TrpG) and a large alpha subunit (TrpE). It depends on Mg(2+) as a cofactor.

The enzyme catalyses chorismate + L-glutamine = anthranilate + pyruvate + L-glutamate + H(+). It functions in the pathway amino-acid biosynthesis; L-tryptophan biosynthesis; L-tryptophan from chorismate: step 1/5. Feedback inhibited by tryptophan. Functionally, part of a heterotetrameric complex that catalyzes the two-step biosynthesis of anthranilate, an intermediate in the biosynthesis of L-tryptophan. In the first step, the glutamine-binding beta subunit (TrpG) of anthranilate synthase (AS) provides the glutamine amidotransferase activity which generates ammonia as a substrate that, along with chorismate, is used in the second step, catalyzed by the large alpha subunit of AS (TrpE) to produce anthranilate. In the absence of TrpG, TrpE can synthesize anthranilate directly from chorismate and high concentrations of ammonia. This Acetivibrio thermocellus (Hungateiclostridium thermocellum) protein is Anthranilate synthase component 1 (trpE).